The primary structure comprises 62 residues: Photosystem II reaction center protein Z (62 aa).

Transmembrane regions (helical) follow at residues 8–28 (AVFALIATSSILLIGVPVVFA) and 41–61 (FSGTSLWIGLVFLVGILNSLI).

The protein belongs to the PsbZ family. As to quaternary structure, PSII is composed of 1 copy each of membrane proteins PsbA, PsbB, PsbC, PsbD, PsbE, PsbF, PsbH, PsbI, PsbJ, PsbK, PsbL, PsbM, PsbT, PsbY, PsbZ, Psb30/Ycf12, at least 3 peripheral proteins of the oxygen-evolving complex and a large number of cofactors. It forms dimeric complexes.

It localises to the plastid. The protein localises to the chloroplast thylakoid membrane. In terms of biological role, may control the interaction of photosystem II (PSII) cores with the light-harvesting antenna, regulates electron flow through the 2 photosystem reaction centers. PSII is a light-driven water plastoquinone oxidoreductase, using light energy to abstract electrons from H(2)O, generating a proton gradient subsequently used for ATP formation. This Panax ginseng (Korean ginseng) protein is Photosystem II reaction center protein Z.